The primary structure comprises 46 residues: Protein krueppel (46 aa).

3 C2H2-type zinc fingers span residues 1–4 (MRLH), 10–32 (YHCT…LRVH), and 38–46 (YACELCTSK).

It belongs to the krueppel C2H2-type zinc-finger protein family.

Its subcellular location is the nucleus. Its function is as follows. Krueppel is a gap class segmentation protein. This is Protein krueppel (Kr) from Lithobius forficatus (Centipede).